Consider the following 456-residue polypeptide: Gustatory receptor for sugar taste 64a (456 aa).

The interval 1–30 is disordered; it reads MKGPNLNFRKTPSKDNGVKQVESLARPETP. Topologically, residues 1–91 are cytoplasmic; it reads MKGPNLNFRK…RESNPRRVRF (91 aa). The chain crosses the membrane as a helical span at residues 92 to 114; that stretch reads AYKSIPMFVTLIFMIATSILFLS. Over 115 to 128 the chain is Extracellular; sequence MFTHLLKIGITAKN. The helical transmembrane segment at 129–150 threads the bilayer; it reads FVGLVFFGCVLSAYVVFIRLAK. Glycine 131 provides a ligand contact to sucrose. At 151–182 the chain is on the cytoplasmic side; the sequence is KWPAVVRIWTRTEIPFTKPPYEIPKRNLSRRV. Residues 183 to 205 traverse the membrane as a helical segment; the sequence is QLAALAIIGLSLGEHALYQVSAI. Sucrose-binding residues include glutamate 196, histidine 197, and tyrosine 234. D-maltose-binding residues include glutamate 196, histidine 197, tyrosine 234, asparagine 253, and threonine 257. Over 206-245 the chain is Extracellular; sequence LSYTRRIQMCANITTVPSFNNYMQTNYDYVFQLLPYSPII. A helical transmembrane segment spans residues 246 to 271; it reads AVLILLINGACTFVWNYMDLFIMMIS. A sucrose-binding site is contributed by threonine 257. Residues 272 to 318 lie on the Cytoplasmic side of the membrane; that stretch reads KGLSYRFEQITTRIRKLEHEEVCESVFIQIREHYVKMCELLEFVDSA. A helical membrane pass occupies residues 319–342; that stretch reads MSSLILLSCVNNLYFVCYQLLNVF. Residues 343–350 lie on the Extracellular side of the membrane; sequence NKLRWPIN. The chain crosses the membrane as a helical span at residues 351–373; sequence YIYFWYSLLYLIGRTAFVFLTAA. Residue tyrosine 353 coordinates sucrose. Tyrosine 353 lines the D-maltose pocket. Topologically, residues 374 to 421 are cytoplasmic; sequence DINEESKRGLGVLRRVSSRSWCVEVERLIFQMTTQTVALSGKKFYFLT. A helical transmembrane segment spans residues 422-441; the sequence is RRLLFGMAGTIVTYELVLLQ. The Extracellular portion of the chain corresponds to 442 to 456; the sequence is FDEPNRRKGLQPLCA.

This sequence belongs to the insect chemoreceptor superfamily. Gustatory receptor (GR) family. Gr5a subfamily. As to quaternary structure, homotetramer. Expressed in Gr5a-expressing sugar-sensing cells.

The protein localises to the cell membrane. One of the few identified sugar gustatory receptors identified so far and which promotes the starvation-induced increase of feeding motivation. Required in combination with Gr64f to detect sucrose, maltose, and glucose. In Drosophila melanogaster (Fruit fly), this protein is Gustatory receptor for sugar taste 64a (Gr64a).